A 73-amino-acid polypeptide reads, in one-letter code: Small ribosomal subunit protein bS18 (73 aa).

It belongs to the bacterial ribosomal protein bS18 family. As to quaternary structure, part of the 30S ribosomal subunit. Forms a tight heterodimer with protein bS6.

Its function is as follows. Binds as a heterodimer with protein bS6 to the central domain of the 16S rRNA, where it helps stabilize the platform of the 30S subunit. The polypeptide is Small ribosomal subunit protein bS18 (Coxiella burnetii (strain Dugway 5J108-111)).